Consider the following 87-residue polypeptide: Small ribosomal subunit protein bS18 (87 aa).

The segment covering 1-19 (MSTRSRARKRSRVRSRTRR) has biased composition (basic residues). The segment at 1-25 (MSTRSRARKRSRVRSRTRRKDPIFV) is disordered.

The protein belongs to the bacterial ribosomal protein bS18 family. As to quaternary structure, part of the 30S ribosomal subunit. Forms a tight heterodimer with protein bS6.

In terms of biological role, binds as a heterodimer with protein bS6 to the central domain of the 16S rRNA, where it helps stabilize the platform of the 30S subunit. This chain is Small ribosomal subunit protein bS18, found in Rhodopirellula baltica (strain DSM 10527 / NCIMB 13988 / SH1).